The chain runs to 88 residues: Small ribosomal subunit protein bS20 (88 aa).

Positions 1 to 27 are disordered; that stretch reads MANSKSAKKRALQSEKRRQHNASRRSM.

It belongs to the bacterial ribosomal protein bS20 family.

Binds directly to 16S ribosomal RNA. The chain is Small ribosomal subunit protein bS20 from Shewanella sediminis (strain HAW-EB3).